Here is a 460-residue protein sequence, read N- to C-terminus: Argininosuccinate lyase (460 aa).

Belongs to the lyase 1 family. Argininosuccinate lyase subfamily.

The protein localises to the cytoplasm. The catalysed reaction is 2-(N(omega)-L-arginino)succinate = fumarate + L-arginine. The protein operates within amino-acid biosynthesis; L-arginine biosynthesis; L-arginine from L-ornithine and carbamoyl phosphate: step 3/3. This chain is Argininosuccinate lyase, found in Leuconostoc mesenteroides subsp. mesenteroides (strain ATCC 8293 / DSM 20343 / BCRC 11652 / CCM 1803 / JCM 6124 / NCDO 523 / NBRC 100496 / NCIMB 8023 / NCTC 12954 / NRRL B-1118 / 37Y).